Here is a 272-residue protein sequence, read N- to C-terminus: Alcohol dehydrogenase-related 31 kDa protein (272 aa).

Position 11 to 34 (11 to 34) interacts with NAD(+); the sequence is YVADCGGIALETSKVLMTKNIAKL. Substrate is bound at residue Ser-139. Tyr-152 (proton acceptor) is an active-site residue.

It belongs to the short-chain dehydrogenases/reductases (SDR) family.

The polypeptide is Alcohol dehydrogenase-related 31 kDa protein (Adhr) (Drosophila teissieri (Fruit fly)).